The primary structure comprises 1212 residues: DNA-directed RNA polymerase subunit beta' (1212 aa).

The Zn(2+) site is built by Cys-60, Cys-62, Cys-75, and Cys-78. 3 residues coordinate Mg(2+): Asp-450, Asp-452, and Asp-454. 4 residues coordinate Zn(2+): Cys-819, Cys-893, Cys-900, and Cys-903.

Belongs to the RNA polymerase beta' chain family. In terms of assembly, the RNAP catalytic core consists of 2 alpha, 1 beta, 1 beta' and 1 omega subunit. When a sigma factor is associated with the core the holoenzyme is formed, which can initiate transcription. It depends on Mg(2+) as a cofactor. Zn(2+) is required as a cofactor.

The enzyme catalyses RNA(n) + a ribonucleoside 5'-triphosphate = RNA(n+1) + diphosphate. Its function is as follows. DNA-dependent RNA polymerase catalyzes the transcription of DNA into RNA using the four ribonucleoside triphosphates as substrates. In Streptococcus thermophilus (strain CNRZ 1066), this protein is DNA-directed RNA polymerase subunit beta'.